We begin with the raw amino-acid sequence, 233 residues long: MTTVKLTYFGHSAFHVEVDGVGIAIDPWITNPLSKTTLEDYLKNFKTDLVVITHAHEDHIGDALEIMRRTGAKFFSIHEIYVDLTQKGFQGIGANIGGPAKLDDVAPGLGIALTPATHSSYDKGVPTGAIIFKDGKALVYHAGDTGLFAEMQFIGELYAPKVALLPIGGHYTMDIEQALLATKLLRPEVVVPMHYNTFPPIRADPNEFKQKVESAGLAKVRVMEPGETVTFEF.

Belongs to the UPF0173 family.

The sequence is that of UPF0173 metal-dependent hydrolase Igni_1254 from Ignicoccus hospitalis (strain KIN4/I / DSM 18386 / JCM 14125).